Reading from the N-terminus, the 338-residue chain is Lipoate-protein ligase A (338 aa).

The region spanning 29-216 is the BPL/LPL catalytic domain; the sequence is PATQRVLFLW…AFFAHYGERV (188 aa). Residues R71, 76-79, and K134 contribute to the ATP site; that span reads GAVF. A (R)-lipoate-binding site is contributed by K134.

The protein belongs to the LplA family. In terms of assembly, monomer.

The protein resides in the cytoplasm. It carries out the reaction L-lysyl-[lipoyl-carrier protein] + (R)-lipoate + ATP = N(6)-[(R)-lipoyl]-L-lysyl-[lipoyl-carrier protein] + AMP + diphosphate + H(+). The protein operates within protein modification; protein lipoylation via exogenous pathway; protein N(6)-(lipoyl)lysine from lipoate: step 1/2. It participates in protein modification; protein lipoylation via exogenous pathway; protein N(6)-(lipoyl)lysine from lipoate: step 2/2. Catalyzes both the ATP-dependent activation of exogenously supplied lipoate to lipoyl-AMP and the transfer of the activated lipoyl onto the lipoyl domains of lipoate-dependent enzymes. This Salmonella choleraesuis (strain SC-B67) protein is Lipoate-protein ligase A.